The primary structure comprises 591 residues: Alpha-(1-&gt;6)-mannopyranosyltransferase Rv1459c (591 aa).

13 helical membrane-spanning segments follow: residues 40-60 (FGAT…ARPV), 80-100 (VSLT…LMLG), 117-137 (TLLL…KDVY), 201-221 (IVAA…LIVW), 235-255 (VSAL…VAGI), 259-279 (ALML…LDMA), 321-341 (EWGP…SSQV), 367-387 (LLLA…ILGW), 408-428 (WMSP…LLGL), 441-461 (AIGV…VLRG), 473-493 (LAVT…WAII), 502-522 (PGFR…GPTA), and 527-547 (FALF…ILLI). Positions 569–591 (ESASKTPATRRPTAAPDAYADST) are disordered. Positions 574-584 (TPATRRPTAAP) are enriched in low complexity.

This sequence belongs to the MptA/B family.

The protein resides in the membrane. Catalyzes the addition of alpha-(1-&gt;6)-mannose residue. In Mycobacterium tuberculosis (strain ATCC 25618 / H37Rv), this protein is Alpha-(1-&gt;6)-mannopyranosyltransferase Rv1459c.